Here is a 493-residue protein sequence, read N- to C-terminus: Glycerol kinase (493 aa).

T13 lines the ADP pocket. ATP contacts are provided by T13, T14, and S15. Residue T13 coordinates sn-glycerol 3-phosphate. R17 provides a ligand contact to ADP. R83, E84, Y135, and D244 together coordinate sn-glycerol 3-phosphate. The glycerol site is built by R83, E84, Y135, D244, and Q245. The ADP site is built by T266 and G309. ATP-binding residues include T266, G309, Q313, and G410. Residues G410 and N414 each coordinate ADP.

Belongs to the FGGY kinase family.

The enzyme catalyses glycerol + ATP = sn-glycerol 3-phosphate + ADP + H(+). It participates in polyol metabolism; glycerol degradation via glycerol kinase pathway; sn-glycerol 3-phosphate from glycerol: step 1/1. Inhibited by fructose 1,6-bisphosphate (FBP). Its function is as follows. Key enzyme in the regulation of glycerol uptake and metabolism. Catalyzes the phosphorylation of glycerol to yield sn-glycerol 3-phosphate. The polypeptide is Glycerol kinase (Shewanella halifaxensis (strain HAW-EB4)).